A 567-amino-acid polypeptide reads, in one-letter code: Formate--tetrahydrofolate ligase (567 aa).

76-83 (TPAGEGKT) provides a ligand contact to ATP.

Belongs to the formate--tetrahydrofolate ligase family.

It carries out the reaction (6S)-5,6,7,8-tetrahydrofolate + formate + ATP = (6R)-10-formyltetrahydrofolate + ADP + phosphate. Its pathway is one-carbon metabolism; tetrahydrofolate interconversion. The sequence is that of Formate--tetrahydrofolate ligase from Sinorhizobium medicae (strain WSM419) (Ensifer medicae).